Reading from the N-terminus, the 150-residue chain is UPF0178 protein Daro_2879 (150 aa).

The protein belongs to the UPF0178 family.

This chain is UPF0178 protein Daro_2879, found in Dechloromonas aromatica (strain RCB).